The sequence spans 196 residues: Imidazole glycerol phosphate synthase subunit HisH (196 aa).

The 195-residue stretch at 2 to 196 (KVAVIKYNAG…ERIIKNFLEL (195 aa)) folds into the Glutamine amidotransferase type-1 domain. Residue cysteine 77 is the Nucleophile of the active site. Active-site residues include histidine 178 and glutamate 180.

In terms of assembly, heterodimer of HisH and HisF.

Its subcellular location is the cytoplasm. It catalyses the reaction 5-[(5-phospho-1-deoxy-D-ribulos-1-ylimino)methylamino]-1-(5-phospho-beta-D-ribosyl)imidazole-4-carboxamide + L-glutamine = D-erythro-1-(imidazol-4-yl)glycerol 3-phosphate + 5-amino-1-(5-phospho-beta-D-ribosyl)imidazole-4-carboxamide + L-glutamate + H(+). The catalysed reaction is L-glutamine + H2O = L-glutamate + NH4(+). The protein operates within amino-acid biosynthesis; L-histidine biosynthesis; L-histidine from 5-phospho-alpha-D-ribose 1-diphosphate: step 5/9. In terms of biological role, IGPS catalyzes the conversion of PRFAR and glutamine to IGP, AICAR and glutamate. The HisH subunit catalyzes the hydrolysis of glutamine to glutamate and ammonia as part of the synthesis of IGP and AICAR. The resulting ammonia molecule is channeled to the active site of HisF. The polypeptide is Imidazole glycerol phosphate synthase subunit HisH (Bacteroides fragilis (strain YCH46)).